A 229-amino-acid polypeptide reads, in one-letter code: UPF0173 metal-dependent hydrolase SAOUHSC_01815 (229 aa).

It belongs to the UPF0173 family.

This chain is UPF0173 metal-dependent hydrolase SAOUHSC_01815, found in Staphylococcus aureus (strain NCTC 8325 / PS 47).